A 504-amino-acid chain; its full sequence is Maturase K (504 aa).

The protein belongs to the intron maturase 2 family. MatK subfamily.

The protein localises to the plastid. Its subcellular location is the chloroplast. In terms of biological role, usually encoded in the trnK tRNA gene intron. Probably assists in splicing its own and other chloroplast group II introns. This Amaranthus caudatus (Love-lies-bleeding) protein is Maturase K.